Consider the following 209-residue polypeptide: Outer-membrane lipoprotein carrier protein (209 aa).

A signal peptide spans M1 to A24.

It belongs to the LolA family. As to quaternary structure, monomer.

Its subcellular location is the periplasm. Participates in the translocation of lipoproteins from the inner membrane to the outer membrane. Only forms a complex with a lipoprotein if the residue after the N-terminal Cys is not an aspartate (The Asp acts as a targeting signal to indicate that the lipoprotein should stay in the inner membrane). This Bordetella avium (strain 197N) protein is Outer-membrane lipoprotein carrier protein.